The following is a 216-amino-acid chain: Guanylate kinase (216 aa).

The Guanylate kinase-like domain maps to 15–193 (GNLFMVVAPS…ALKQLQNVVH (179 aa)). Position 22–29 (22–29 (APSGAGKS)) interacts with ATP.

The protein belongs to the guanylate kinase family.

It localises to the cytoplasm. It catalyses the reaction GMP + ATP = GDP + ADP. Functionally, essential for recycling GMP and indirectly, cGMP. This is Guanylate kinase from Cupriavidus metallidurans (strain ATCC 43123 / DSM 2839 / NBRC 102507 / CH34) (Ralstonia metallidurans).